The following is a 432-amino-acid chain: D-amino acid dehydrogenase (432 aa).

Residue 3–17 participates in FAD binding; sequence VVILGSGVVGVTSAW.

This sequence belongs to the DadA oxidoreductase family. Requires FAD as cofactor.

It carries out the reaction a D-alpha-amino acid + A + H2O = a 2-oxocarboxylate + AH2 + NH4(+). It participates in amino-acid degradation; D-alanine degradation; NH(3) and pyruvate from D-alanine: step 1/1. In terms of biological role, oxidative deamination of D-amino acids. This Salmonella agona (strain SL483) protein is D-amino acid dehydrogenase.